The following is a 126-amino-acid chain: uncharacterized protein (126 aa).

Residues 1–23 form the signal peptide; sequence MLKKLIMGFFLLILLGIAGVAVM.

This is an uncharacterized protein from Archaeoglobus fulgidus (strain ATCC 49558 / DSM 4304 / JCM 9628 / NBRC 100126 / VC-16).